The sequence spans 240 residues: 1-(5-phosphoribosyl)-5-[(5-phosphoribosylamino)methylideneamino] imidazole-4-carboxamide isomerase (240 aa).

Asp8 (proton acceptor) is an active-site residue. Asp129 functions as the Proton donor in the catalytic mechanism.

The protein belongs to the HisA/HisF family.

The protein resides in the cytoplasm. The enzyme catalyses 1-(5-phospho-beta-D-ribosyl)-5-[(5-phospho-beta-D-ribosylamino)methylideneamino]imidazole-4-carboxamide = 5-[(5-phospho-1-deoxy-D-ribulos-1-ylimino)methylamino]-1-(5-phospho-beta-D-ribosyl)imidazole-4-carboxamide. It functions in the pathway amino-acid biosynthesis; L-histidine biosynthesis; L-histidine from 5-phospho-alpha-D-ribose 1-diphosphate: step 4/9. The protein is 1-(5-phosphoribosyl)-5-[(5-phosphoribosylamino)methylideneamino] imidazole-4-carboxamide isomerase of Listeria monocytogenes serotype 4b (strain F2365).